We begin with the raw amino-acid sequence, 306 residues long: Cathepsin Z (306 aa).

Positions 1–20 (MLAILFNFFLLTYFTNITLG) are cleaved as a signal peptide. Positions 21–65 (KVGKSIDLDTRNGYNVHGCYKQTGKIYAHKTYPRQYEAENYNFDD) are cleaved as a propeptide — activation peptide. Cystine bridges form between Cys-39–Cys-96, Cys-93–Cys-136, Cys-130–Cys-168, Cys-158–Cys-174, and Cys-177–Cys-182. Residue Cys-96 is part of the active site. An N-linked (GlcNAc...) asparagine glycan is attached at Asn-187. A disulfide bridge connects residues Cys-217 and Cys-299. Active-site residues include His-243 and Asn-265. A glycan (N-linked (GlcNAc...) asparagine) is linked at Asn-286.

It belongs to the peptidase C1 family.

Its subcellular location is the cytoplasmic vesicle. It is found in the secretory vesicle. The protein resides in the secreted. The enzyme catalyses Release of C-terminal amino acid residues with broad specificity, but lacks action on C-terminal proline. Shows weak endopeptidase activity.. The disulfide bridge formed between Cys-39 in the propeptide and the active site residue Cys-96 may prevent activation of the zymogen through formation of a reversible covalent bond with the active site residue. Its function is as follows. Exhibits carboxy-monopeptidase as well as carboxy-dipeptidase activity. Plays an essential role in molting, a process during larval stages in which a new cuticle is formed and the old cuticle is shed. Required for the degradation and shedding of the old cuticle. The chain is Cathepsin Z from Onchocerca volvulus.